We begin with the raw amino-acid sequence, 178 residues long: Nicotinamide-nucleotide adenylyltransferase (178 aa).

This sequence belongs to the archaeal NMN adenylyltransferase family.

The protein localises to the cytoplasm. The enzyme catalyses beta-nicotinamide D-ribonucleotide + ATP + H(+) = diphosphate + NAD(+). It participates in cofactor biosynthesis; NAD(+) biosynthesis; NAD(+) from nicotinamide D-ribonucleotide: step 1/1. The chain is Nicotinamide-nucleotide adenylyltransferase from Caldivirga maquilingensis (strain ATCC 700844 / DSM 13496 / JCM 10307 / IC-167).